The following is a 110-amino-acid chain: Large ribosomal subunit protein P2 (110 aa).

The interval 63-110 is disordered; it reads ASVPSGGGVAAAAPAAGGGGADPAEAKEEKKEEPEEESDDDMGFGLFD. Over residues 86–95 the composition is skewed to basic and acidic residues; sequence AEAKEEKKEE.

Belongs to the eukaryotic ribosomal protein P1/P2 family. P1 and P2 exist as dimers at the large ribosomal subunit. In terms of processing, phosphorylated.

Functionally, plays an important role in the elongation step of protein synthesis. This Cryptochiton stelleri (Giant gumboot chiton) protein is Large ribosomal subunit protein P2.